A 208-amino-acid chain; its full sequence is Ribosomal RNA large subunit methyltransferase E (208 aa).

The S-adenosyl-L-methionine site is built by Gly-63, Trp-65, Asp-83, Asp-99, and Asp-124. Lys-164 (proton acceptor) is an active-site residue.

This sequence belongs to the class I-like SAM-binding methyltransferase superfamily. RNA methyltransferase RlmE family.

Its subcellular location is the cytoplasm. The catalysed reaction is uridine(2552) in 23S rRNA + S-adenosyl-L-methionine = 2'-O-methyluridine(2552) in 23S rRNA + S-adenosyl-L-homocysteine + H(+). Functionally, specifically methylates the uridine in position 2552 of 23S rRNA at the 2'-O position of the ribose in the fully assembled 50S ribosomal subunit. The polypeptide is Ribosomal RNA large subunit methyltransferase E (Alcanivorax borkumensis (strain ATCC 700651 / DSM 11573 / NCIMB 13689 / SK2)).